A 131-amino-acid chain; its full sequence is UPF0102 protein RPD_0400 (131 aa).

Belongs to the UPF0102 family.

The polypeptide is UPF0102 protein RPD_0400 (Rhodopseudomonas palustris (strain BisB5)).